A 304-amino-acid chain; its full sequence is Probable 5-dehydro-4-deoxyglucarate dehydratase (304 aa).

The protein belongs to the DapA family.

The enzyme catalyses 5-dehydro-4-deoxy-D-glucarate + H(+) = 2,5-dioxopentanoate + CO2 + H2O. The protein operates within carbohydrate acid metabolism; D-glucarate degradation; 2,5-dioxopentanoate from D-glucarate: step 2/2. This Arthrobacter sp. (strain FB24) protein is Probable 5-dehydro-4-deoxyglucarate dehydratase.